The chain runs to 364 residues: Histidinol-phosphate aminotransferase 1 (364 aa).

Lysine 211 carries the post-translational modification N6-(pyridoxal phosphate)lysine.

It belongs to the class-II pyridoxal-phosphate-dependent aminotransferase family. Histidinol-phosphate aminotransferase subfamily. As to quaternary structure, homodimer. Requires pyridoxal 5'-phosphate as cofactor.

The enzyme catalyses L-histidinol phosphate + 2-oxoglutarate = 3-(imidazol-4-yl)-2-oxopropyl phosphate + L-glutamate. The protein operates within amino-acid biosynthesis; L-histidine biosynthesis; L-histidine from 5-phospho-alpha-D-ribose 1-diphosphate: step 7/9. This chain is Histidinol-phosphate aminotransferase 1, found in Legionella pneumophila (strain Lens).